A 604-amino-acid chain; its full sequence is Aspartate--tRNA(Asp/Asn) ligase (604 aa).

Glutamate 174 is a binding site for L-aspartate. The interval 198–201 (QLYK) is aspartate. Arginine 220 serves as a coordination point for L-aspartate. ATP is bound by residues 220–222 (RDE) and glutamine 229. Histidine 460 contacts L-aspartate. ATP is bound at residue glutamate 494. Arginine 501 lines the L-aspartate pocket. Position 546-549 (546-549 (GLDR)) interacts with ATP.

It belongs to the class-II aminoacyl-tRNA synthetase family. Type 1 subfamily. As to quaternary structure, homodimer.

The protein localises to the cytoplasm. It catalyses the reaction tRNA(Asx) + L-aspartate + ATP = L-aspartyl-tRNA(Asx) + AMP + diphosphate. Its function is as follows. Aspartyl-tRNA synthetase with relaxed tRNA specificity since it is able to aspartylate not only its cognate tRNA(Asp) but also tRNA(Asn). Reaction proceeds in two steps: L-aspartate is first activated by ATP to form Asp-AMP and then transferred to the acceptor end of tRNA(Asp/Asn). The polypeptide is Aspartate--tRNA(Asp/Asn) ligase (Paracidovorax citrulli (strain AAC00-1) (Acidovorax citrulli)).